The sequence spans 394 residues: Methionine import ATP-binding protein MetN 2 (394 aa).

An ABC transporter domain is found at 39 to 278 (VSLEQVGKVF…PRHGATRALL (240 aa)). An ATP-binding site is contributed by 75–82 (GRSGAGKS).

The protein belongs to the ABC transporter superfamily. Methionine importer (TC 3.A.1.24) family. The complex is composed of two ATP-binding proteins (MetN), two transmembrane proteins (MetI) and a solute-binding protein (MetQ).

The protein resides in the cell inner membrane. The catalysed reaction is L-methionine(out) + ATP + H2O = L-methionine(in) + ADP + phosphate + H(+). It carries out the reaction D-methionine(out) + ATP + H2O = D-methionine(in) + ADP + phosphate + H(+). Its function is as follows. Part of the ABC transporter complex MetNIQ involved in methionine import. Responsible for energy coupling to the transport system. This Burkholderia cenocepacia (strain HI2424) protein is Methionine import ATP-binding protein MetN 2.